We begin with the raw amino-acid sequence, 148 residues long: Ribose-5-P isomerase B (148 aa).

Residue 8 to 9 coordinates D-ribulose 5-phosphate; that stretch reads DE. Cys-65 acts as the Proton acceptor in catalysis. D-ribulose 5-phosphate is bound by residues 66–70, Asn-99, Arg-132, and Lys-136; that span reads GTGIG.

Belongs to the LacAB/RpiB family.

The enzyme catalyses aldehydo-D-ribose 5-phosphate = D-ribulose 5-phosphate. Its pathway is carbohydrate degradation; pentose phosphate pathway; D-ribose 5-phosphate from D-ribulose 5-phosphate (non-oxidative stage): step 1/1. Catalyzes the interconversion of ribulose-5-P and ribose-5-P. The chain is Ribose-5-P isomerase B from Listeria innocua serovar 6a (strain ATCC BAA-680 / CLIP 11262).